The sequence spans 700 residues: Mitogen-activated protein kinase 9 (700 aa).

The Protein kinase domain maps to Tyr107–Phe398. ATP-binding positions include Ile113–Val121 and Lys136. The Proton acceptor role is filled by Asp233. At Thr269 the chain carries Phosphothreonine. The TXY motif lies at Thr269 to Tyr271. Tyr271 is subject to Phosphotyrosine. A disordered region spans residues Glu475–Asp523.

Belongs to the protein kinase superfamily. CMGC Ser/Thr protein kinase family. MAP kinase subfamily. In terms of processing, dually phosphorylated on Thr-269 and Tyr-271, which activates the enzyme.

The enzyme catalyses L-seryl-[protein] + ATP = O-phospho-L-seryl-[protein] + ADP + H(+). The catalysed reaction is L-threonyl-[protein] + ATP = O-phospho-L-threonyl-[protein] + ADP + H(+). Activated by threonine and tyrosine phosphorylation. This Oryza sativa subsp. japonica (Rice) protein is Mitogen-activated protein kinase 9 (MPK9).